Reading from the N-terminus, the 165-residue chain is Ribosome maturation factor RimM (165 aa).

One can recognise a PRC barrel domain in the interval 89–161 (EADTHYVVDL…KIVIKPVRQW (73 aa)).

The protein belongs to the RimM family. Binds ribosomal protein uS19.

The protein resides in the cytoplasm. An accessory protein needed during the final step in the assembly of 30S ribosomal subunit, possibly for assembly of the head region. Essential for efficient processing of 16S rRNA. May be needed both before and after RbfA during the maturation of 16S rRNA. It has affinity for free ribosomal 30S subunits but not for 70S ribosomes. The chain is Ribosome maturation factor RimM from Clostridium botulinum (strain Eklund 17B / Type B).